A 108-amino-acid polypeptide reads, in one-letter code: MGLSSNSAVRVEWIAAVTFAAGTAALGYLAYKKFYAKENRTKAMVNLQIQKDNPKVVHAFDMEDLGDKAVYCRCWRSKKFPFCDGAHIKHNEETGDNVGPLIIKKKET.

Residues 14 to 31 form a helical; Signal-anchor for type III membrane protein membrane-spanning segment; that stretch reads IAAVTFAAGTAALGYLAY. Residues 32 to 108 lie on the Cytoplasmic side of the membrane; that stretch reads KKFYAKENRT…GPLIIKKKET (77 aa). K42 participates in a covalent cross-link: Glycyl lysine isopeptide (Lys-Gly) (interchain with G-Cter in ubiquitin). K55 functions as the Schiff-base intermediate with pyridoxal 5'-phosphate in the catalytic mechanism. N6-acetyllysine; alternate is present on residues K55 and K68. Glycyl lysine isopeptide (Lys-Gly) (interchain with G-Cter in ubiquitin); alternate cross-links involve residues K55 and K68. 2 residues coordinate [2Fe-2S] cluster: C72 and C74. Residues K78 and K79 each participate in a glycyl lysine isopeptide (Lys-Gly) (interchain with G-Cter in ubiquitin) cross-link. [2Fe-2S] cluster is bound by residues C83 and H87. K89 participates in a covalent cross-link: Glycyl lysine isopeptide (Lys-Gly) (interchain with G-Cter in ubiquitin). The residue at position 104 (K104) is an N6-acetyllysine; alternate. A Glycyl lysine isopeptide (Lys-Gly) (interchain with G-Cter in ubiquitin); alternate cross-link involves residue K104. Glycyl lysine isopeptide (Lys-Gly) (interchain with G-Cter in ubiquitin) cross-links involve residues K105 and K106.

It belongs to the CISD protein family. In terms of assembly, homodimer. [2Fe-2S] cluster is required as a cofactor. Pyridoxal 5'-phosphate serves as cofactor. In terms of processing, ubiquitinated by PRKN during mitophagy, leading to its degradation and enhancement of mitophagy. Deubiquitinated by USP30. As to expression, liver, adipose, skeletal muscle and heart (at protein level). Widely expressed. Expressed at the highest levels in the heart.

The protein resides in the mitochondrion outer membrane. It carries out the reaction L-cysteine + 2-oxoglutarate = 2-oxo-3-sulfanylpropanoate + L-glutamate. Its function is as follows. L-cysteine transaminase that catalyzes the reversible transfer of the amino group from L-cysteine to the alpha-keto acid 2-oxoglutarate to respectively form 2-oxo-3-sulfanylpropanoate and L-glutamate. The catalytic cycle occurs in the presence of pyridoxal 5'-phosphate (PLP) cofactor that facilitates transamination by initially forming an internal aldimine with the epsilon-amino group of active site Lys-55 residue on the enzyme (PLP-enzyme aldimine), subsequently displaced by formation of an external aldimine with the substrate amino group (PLP-L-cysteine aldimine). The external aldimine is further deprotonated to form a carbanion intermediate, which in the presence of 2-oxoglutarate regenerates PLP yielding final products 2-oxo-3-sulfanylpropanoate and L-glutamate. The proton transfer in carbanion intermediate is suggested to be controlled by the active site lysine residue, whereas PLP stabilizes carbanion structure through electron delocalization, also known as the electron sink effect. Plays a key role in regulating maximal capacity for electron transport and oxidative phosphorylation. May be involved in iron-sulfur cluster shuttling and/or in redox reactions. Can transfer the [2Fe-2S] cluster to an apo-acceptor protein only when in the oxidation state, likely serving as a redox sensor that regulates mitochondrial iron-sulfur cluster assembly and iron trafficking upon oxidative stress. The protein is CDGSH iron-sulfur domain-containing protein 1 (Cisd1) of Mus musculus (Mouse).